The chain runs to 424 residues: MTISILGARVIDPKTGLDQVTDLHLDGGRIAAIGAAPAGFSASRTIQADGVVAAPGLVDLGVSLREPGYSRKGNIRSETRAAVAGGVTSLCCPPQTRPVLDTLAVAELILDRAREAANSKVYPIGALTKGLEGEQLAELVALRDTGCVAFGNGLKQIPNNRTLARALEYAATFDLTVVFHSQDRDLAEGGLAHEGAMASFLGLPGIPESAETVALARNLLLVEQSGVRAHFSQITSARGAQLIAQAQELGLPVTADVALYQLILTDESVRQFSSLYHVQPPLRTAKDRDGLRAAVKSGVIQAISSHHQPHERDAKLAPFGATEPGISSVELLLPLAMTLVQDGLLDLPTLLARLSSGPAAALRVPAGELKVGGAADLVLFDPQASTVAGEQWSSRGENCPFIGHCLPGAVRYTLVDGHVCHGPE.

This sequence belongs to the metallo-dependent hydrolases superfamily. DHOase family. PyrC' subfamily. Heterododecamer of 6 active PyrB subunits and 6 non-catalytic PyrC' subunits.

In terms of biological role, non-functional DHOase. This chain is Dihydroorotase-like protein, found in Pseudomonas putida (Arthrobacter siderocapsulatus).